The following is a 245-amino-acid chain: Farnesol dehydrogenase (245 aa).

Residues 11–40 (VTGA…ARRV) and Asp64 contribute to the NAD(+) site. Ser145 contacts substrate. Tyr160 (proton acceptor) is an active-site residue. NAD(+) is bound at residue Lys164.

This sequence belongs to the short-chain dehydrogenases/reductases (SDR) family. As to quaternary structure, homodimer. In terms of tissue distribution, highly expressed level in the midgut and brain in adult females, and at lower level in the abdominal and thoracic ganglia. High levels are detected in corpora allata (CA), Malpighian tubules and fat body.

It carries out the reaction (2E,6E)-farnesol + NADP(+) = (2E,6E)-farnesal + NADPH + H(+). Its function is as follows. Mediates oxidation of farnesol into farnesal, a precursor of juvenile hormone in the corpora allata (CA), the glands that synthesize juvenile hormone. Able to oxidize C(10) to C(15) isoprenoid and aliphatic alcohols. This is Farnesol dehydrogenase from Aedes aegypti (Yellowfever mosquito).